The primary structure comprises 441 residues: Trigger factor (441 aa).

A PPIase FKBP-type domain is found at 163–248; it reads GDQVVFDFVG…IKEVKKPVPA (86 aa).

The protein belongs to the FKBP-type PPIase family. Tig subfamily.

Its subcellular location is the cytoplasm. It carries out the reaction [protein]-peptidylproline (omega=180) = [protein]-peptidylproline (omega=0). Involved in protein export. Acts as a chaperone by maintaining the newly synthesized protein in an open conformation. Functions as a peptidyl-prolyl cis-trans isomerase. This is Trigger factor from Jannaschia sp. (strain CCS1).